The sequence spans 513 residues: ATP synthase subunit alpha 1 (513 aa).

169–176 is an ATP binding site; sequence GDRQTGKT.

Belongs to the ATPase alpha/beta chains family. F-type ATPases have 2 components, CF(1) - the catalytic core - and CF(0) - the membrane proton channel. CF(1) has five subunits: alpha(3), beta(3), gamma(1), delta(1), epsilon(1). CF(0) has three main subunits: a(1), b(2) and c(9-12). The alpha and beta chains form an alternating ring which encloses part of the gamma chain. CF(1) is attached to CF(0) by a central stalk formed by the gamma and epsilon chains, while a peripheral stalk is formed by the delta and b chains.

The protein localises to the cell inner membrane. It catalyses the reaction ATP + H2O + 4 H(+)(in) = ADP + phosphate + 5 H(+)(out). In terms of biological role, produces ATP from ADP in the presence of a proton gradient across the membrane. The alpha chain is a regulatory subunit. The sequence is that of ATP synthase subunit alpha 1 from Methylococcus capsulatus (strain ATCC 33009 / NCIMB 11132 / Bath).